A 236-amino-acid chain; its full sequence is Large ribosomal subunit protein uL2 (236 aa).

Residues 198-236 are disordered; it reads DHPFGGGGRQHPGRPKTVSRGTPPGRKVGSIAARRTGKR.

It belongs to the universal ribosomal protein uL2 family. Part of the 50S ribosomal subunit. Forms a bridge to the 30S subunit in the 70S ribosome.

In terms of biological role, one of the primary rRNA binding proteins. Required for association of the 30S and 50S subunits to form the 70S ribosome, for tRNA binding and peptide bond formation. It has been suggested to have peptidyltransferase activity; this is somewhat controversial. Makes several contacts with the 16S rRNA in the 70S ribosome. This Methanothrix thermoacetophila (strain DSM 6194 / JCM 14653 / NBRC 101360 / PT) (Methanosaeta thermophila) protein is Large ribosomal subunit protein uL2.